A 595-amino-acid polypeptide reads, in one-letter code: Aspartate--tRNA(Asp/Asn) ligase (595 aa).

E171 lines the L-aspartate pocket. The segment at 195–198 is aspartate; that stretch reads QLFK. R217 serves as a coordination point for L-aspartate. Residues 217–219 and Q226 each bind ATP; that span reads RDE. Position 454 (H454) interacts with L-aspartate. ATP is bound at residue E488. R495 provides a ligand contact to L-aspartate. 540-543 contributes to the ATP binding site; that stretch reads GLDR.

This sequence belongs to the class-II aminoacyl-tRNA synthetase family. Type 1 subfamily. In terms of assembly, homodimer.

Its subcellular location is the cytoplasm. It carries out the reaction tRNA(Asx) + L-aspartate + ATP = L-aspartyl-tRNA(Asx) + AMP + diphosphate. In terms of biological role, aspartyl-tRNA synthetase with relaxed tRNA specificity since it is able to aspartylate not only its cognate tRNA(Asp) but also tRNA(Asn). Reaction proceeds in two steps: L-aspartate is first activated by ATP to form Asp-AMP and then transferred to the acceptor end of tRNA(Asp/Asn). This chain is Aspartate--tRNA(Asp/Asn) ligase, found in Bordetella petrii (strain ATCC BAA-461 / DSM 12804 / CCUG 43448).